Reading from the N-terminus, the 74-residue chain is Large ribosomal subunit protein bL31 (74 aa).

Belongs to the bacterial ribosomal protein bL31 family. Type A subfamily. In terms of assembly, part of the 50S ribosomal subunit.

In terms of biological role, binds the 23S rRNA. The sequence is that of Large ribosomal subunit protein bL31 from Afipia carboxidovorans (strain ATCC 49405 / DSM 1227 / KCTC 32145 / OM5) (Oligotropha carboxidovorans).